The sequence spans 213 residues: MIASVTGEVAFVGATLAVVEVSGFGIEVHASPRTLSGLRVGATTRLHTAYIARKDEAPLLFGFAQGDEKEIFTVMLGVSGVGPRTALAAVSVLGPEDARRAIAAGDDKAFTAVPGIGPKSARRIVLELADKLVLPEPPVQQANQPQVPVWRDQVVDALTGLGWSEKDAVRGIEDALQTQPELGDSGNVAEILRAVLSWLGTSKGTTHAPTGRR.

Residues 1 to 64 form a domain I region; sequence MIASVTGEVA…DEAPLLFGFA (64 aa). The segment at 65-143 is domain II; the sequence is QGDEKEIFTV…LPEPPVQQAN (79 aa). The flexible linker stretch occupies residues 144 to 152; that stretch reads QPQVPVWRD. Positions 152–213 are domain III; it reads DQVVDALTGL…GTTHAPTGRR (62 aa).

This sequence belongs to the RuvA family. In terms of assembly, homotetramer. Forms an RuvA(8)-RuvB(12)-Holliday junction (HJ) complex. HJ DNA is sandwiched between 2 RuvA tetramers; dsDNA enters through RuvA and exits via RuvB. An RuvB hexamer assembles on each DNA strand where it exits the tetramer. Each RuvB hexamer is contacted by two RuvA subunits (via domain III) on 2 adjacent RuvB subunits; this complex drives branch migration. In the full resolvosome a probable DNA-RuvA(4)-RuvB(12)-RuvC(2) complex forms which resolves the HJ.

The protein localises to the cytoplasm. The RuvA-RuvB-RuvC complex processes Holliday junction (HJ) DNA during genetic recombination and DNA repair, while the RuvA-RuvB complex plays an important role in the rescue of blocked DNA replication forks via replication fork reversal (RFR). RuvA specifically binds to HJ cruciform DNA, conferring on it an open structure. The RuvB hexamer acts as an ATP-dependent pump, pulling dsDNA into and through the RuvAB complex. HJ branch migration allows RuvC to scan DNA until it finds its consensus sequence, where it cleaves and resolves the cruciform DNA. The protein is Holliday junction branch migration complex subunit RuvA of Kocuria rhizophila (strain ATCC 9341 / DSM 348 / NBRC 103217 / DC2201).